A 153-amino-acid polypeptide reads, in one-letter code: SsrA-binding protein (153 aa).

Positions 132–153 (REKDWLRERERVMKHDTRRRSD) are disordered.

This sequence belongs to the SmpB family.

It is found in the cytoplasm. Functionally, required for rescue of stalled ribosomes mediated by trans-translation. Binds to transfer-messenger RNA (tmRNA), required for stable association of tmRNA with ribosomes. tmRNA and SmpB together mimic tRNA shape, replacing the anticodon stem-loop with SmpB. tmRNA is encoded by the ssrA gene; the 2 termini fold to resemble tRNA(Ala) and it encodes a 'tag peptide', a short internal open reading frame. During trans-translation Ala-aminoacylated tmRNA acts like a tRNA, entering the A-site of stalled ribosomes, displacing the stalled mRNA. The ribosome then switches to translate the ORF on the tmRNA; the nascent peptide is terminated with the 'tag peptide' encoded by the tmRNA and targeted for degradation. The ribosome is freed to recommence translation, which seems to be the essential function of trans-translation. The polypeptide is SsrA-binding protein (Bordetella avium (strain 197N)).